Here is a 93-residue protein sequence, read N- to C-terminus: Translation initiation factor IF-1 (93 aa).

Residues 1–72 (MAKEELIQFE…EKGRLIFRHK (72 aa)) form the S1-like domain. The tract at residues 69–93 (FRHKDERPSGAPRGGPPRGGQFRRR) is disordered.

This sequence belongs to the IF-1 family. As to quaternary structure, component of the 30S ribosomal translation pre-initiation complex which assembles on the 30S ribosome in the order IF-2 and IF-3, IF-1 and N-formylmethionyl-tRNA(fMet); mRNA recruitment can occur at any time during PIC assembly.

Its subcellular location is the cytoplasm. Functionally, one of the essential components for the initiation of protein synthesis. Stabilizes the binding of IF-2 and IF-3 on the 30S subunit to which N-formylmethionyl-tRNA(fMet) subsequently binds. Helps modulate mRNA selection, yielding the 30S pre-initiation complex (PIC). Upon addition of the 50S ribosomal subunit IF-1, IF-2 and IF-3 are released leaving the mature 70S translation initiation complex. This chain is Translation initiation factor IF-1, found in Nitrobacter hamburgensis (strain DSM 10229 / NCIMB 13809 / X14).